The chain runs to 31 residues: MAAAALRQIWARKFLPVPWLLCGPRRYASSS.

The transit peptide at 1-27 (MAAAALRQIWARKFLPVPWLLCGPRRY) directs the protein to the mitochondrion.

The protein belongs to the class-IV pyridoxal-phosphate-dependent aminotransferase family. In terms of assembly, homodimer. The cofactor is pyridoxal 5'-phosphate.

Its subcellular location is the mitochondrion. The enzyme catalyses L-leucine + 2-oxoglutarate = 4-methyl-2-oxopentanoate + L-glutamate. It catalyses the reaction L-isoleucine + 2-oxoglutarate = (S)-3-methyl-2-oxopentanoate + L-glutamate. It carries out the reaction L-valine + 2-oxoglutarate = 3-methyl-2-oxobutanoate + L-glutamate. Catalyzes the first reaction in the catabolism of the essential branched chain amino acids leucine, isoleucine, and valine. May also function as a transporter of branched chain alpha-keto acids. The protein is Branched-chain-amino-acid aminotransferase, mitochondrial (BCAT2) of Sus scrofa (Pig).